A 343-amino-acid chain; its full sequence is Glycerol-3-phosphate dehydrogenase [NAD(P)+] (343 aa).

The NADPH site is built by Ser-11, Trp-12, Arg-32, and Lys-106. Residues Lys-106, Gly-137, and Ser-139 each coordinate sn-glycerol 3-phosphate. Ala-141 lines the NADPH pocket. Sn-glycerol 3-phosphate-binding residues include Lys-192, Asp-245, Ser-255, Arg-256, and Asn-257. Lys-192 (proton acceptor) is an active-site residue. Arg-256 is a binding site for NADPH. Val-280 and Glu-282 together coordinate NADPH.

Belongs to the NAD-dependent glycerol-3-phosphate dehydrogenase family.

Its subcellular location is the cytoplasm. It catalyses the reaction sn-glycerol 3-phosphate + NAD(+) = dihydroxyacetone phosphate + NADH + H(+). The catalysed reaction is sn-glycerol 3-phosphate + NADP(+) = dihydroxyacetone phosphate + NADPH + H(+). The protein operates within membrane lipid metabolism; glycerophospholipid metabolism. Functionally, catalyzes the reduction of the glycolytic intermediate dihydroxyacetone phosphate (DHAP) to sn-glycerol 3-phosphate (G3P), the key precursor for phospholipid synthesis. The chain is Glycerol-3-phosphate dehydrogenase [NAD(P)+] from Syntrophomonas wolfei subsp. wolfei (strain DSM 2245B / Goettingen).